Consider the following 143-residue polypeptide: MLEFDTIKDSKQLNGLALAYIGDAIFEVYVRHHLLKQGFTKPNDLHKKSSRIVSAKSQAEILFFLQNQSFFTEEEEAVLKRGRNAKSGTTPKNTDVQTYRYSTAFEALLGYLFLEKKEERLSQLVAEAIQFGTSGRKTNESAT.

Residue Asp23 is part of the active site.

The protein belongs to the MrnC RNase family. In terms of assembly, homodimer. Mg(2+) serves as cofactor.

The protein localises to the cytoplasm. Its function is as follows. Involved in correct processing of both the 5' and 3' ends of 23S rRNA precursor. Processes 30S rRNA precursor transcript even in absence of ribonuclease 3 (Rnc); Rnc processes 30S rRNA into smaller rRNA precursors. Cleaves more efficiently on assembled 50S ribosomal subunits. Cleavage is strongly stimulated by ribosomal protein L3 (RplC); 20-30% DMSO can replace RplC, suggesting RplC may alter rRNA conformation. The protein is Mini-ribonuclease 3 (mrnC) of Bacillus subtilis (strain 168).